The following is a 307-amino-acid chain: Protein Y (307 aa).

This sequence belongs to the ATP-dependent AMP-binding enzyme family.

The protein operates within antibiotic biosynthesis; candicidin biosynthesis. May be a p-aminobenzoic acid-CoA ligase that activates PabA to start the biosynthesis of candicidin. The sequence is that of Protein Y from Streptomyces griseus.